A 609-amino-acid chain; its full sequence is 2',5'-phosphodiesterase 12 (609 aa).

A mitochondrion-targeting transit peptide spans 1 to 42; that stretch reads MWRLPGARAALRVIRTAVEKLSRAEAGSQTAAGAMERAVVRC. Residues 89-99 are compositionally biased toward basic residues; the sequence is AAAAKKSRKSR. Disordered regions lie at residues 89 to 111 and 206 to 230; these read AAAA…CSGP and AEPE…ETDV. Composition is skewed to low complexity over residues 100 to 111 and 213 to 224; these read PNASGGAACSGP and PSSLSPSSPSSS. Ser-217 carries the post-translational modification Phosphoserine. Residues Glu-351, Asp-496, and Asn-498 each coordinate Mg(2+). Catalysis depends on Asp-496, which acts as the Proton donor/acceptor.

This sequence belongs to the CCR4/nocturin family. Requires Mg(2+) as cofactor. In terms of tissue distribution, ubiquitous.

Its subcellular location is the mitochondrion matrix. It carries out the reaction Exonucleolytic cleavage of poly(A) to 5'-AMP.. In terms of biological role, enzyme that cleaves 2',5'-phosphodiester bond linking adenosines of the 5'-triphosphorylated oligoadenylates, triphosphorylated oligoadenylates referred as 2-5A modulates the 2-5A system. Degrades triphosphorylated 2-5A to produce AMP and ATP. Also cleaves 3',5'-phosphodiester bond of oligoadenylates. Plays a role as a negative regulator of the 2-5A system that is one of the major pathways for antiviral and antitumor functions induced by interferons (IFNs). Suppression of this enzyme increases cellular 2-5A levels and decreases viral replication in cultured small-airway epithelial cells and Hela cells. The sequence is that of 2',5'-phosphodiesterase 12 (PDE12) from Homo sapiens (Human).